Reading from the N-terminus, the 317-residue chain is DNA repair nuclease/redox regulator APEX1 (317 aa).

The segment at 1-32 (MPKRGKRAAAEDGEEPKSEPETKKSKGAAKKT) is necessary for interaction with YBX1, binding to RNA, association together with NPM1 to rRNA, endoribonuclease activity on abasic RNA and localization in the nucleoli. Residues 1–57 (MPKRGKRAAAEDGEEPKSEPETKKSKGAAKKTEKEAAGEGPVLYEDPPDQKTSASGK) form a disordered region. At lysine 6 the chain carries N6-acetyllysine; by EP300. Positions 8–12 (AAAED) match the Nuclear localization signal (NLS) motif. Over residues 15–37 (EPKSEPETKKSKGAAKKTEKEAA) the composition is skewed to basic and acidic residues. Serine 18 carries the phosphoserine modification. A necessary for interaction with NPM1 and for efficient rRNA binding region spans residues 22 to 32 (TKKSKGAAKKT). N6-acetyllysine is present on residues lysine 26, lysine 30, lysine 31, and lysine 34. Phosphoserine is present on serine 53. The Nuclear export signal (NES) signature appears at 63 to 79 (ICSWNVDGLRAWIKKKG). Residue cysteine 64 is modified to S-nitrosocysteine; alternate. Cysteine 64 and cysteine 92 are joined by a disulfide. Residue aspartate 69 participates in Mg(2+) binding. Cysteine 92 carries the S-nitrosocysteine; alternate modification. Glutamate 95 lines the Mg(2+) pocket. Tyrosine 170 is an active-site residue. At lysine 196 the chain carries N6-acetyllysine. 2 residues coordinate Mg(2+): aspartate 209 and asparagine 211. The Proton donor/acceptor role is filled by aspartate 209. Threonine 232 carries the post-translational modification Phosphothreonine; by CDK5. Residues 288 to 317 (HSLLPALCDSKIRSKALGSDHCPITLYLAL) are mitochondrial targeting sequence (MTS). Aspartate 307 lines the Mg(2+) pocket. Residue cysteine 309 is modified to S-nitrosocysteine.

The protein belongs to the DNA repair enzymes AP/ExoA family. In terms of assembly, monomer. Homodimer; disulfide-linked. Component of the SET complex, composed of at least APEX1, SET, ANP32A, HMGB2, NME1 and TREX1. Associates with the dimer XRCC5/XRCC6 in a DNA-dependent manner. Interacts with SIRT1; the interaction is increased in the context of genotoxic stress. Interacts with HDAC1, HDAC2 and HDAC3; the interactions are not dependent on the APEX1 acetylation status. Interacts with XRCC1; the interaction is induced by SIRT1 and increased with the APEX1 acetylated form. Interacts with NPM1 (via N-terminal domain); the interaction is RNA-dependent and decreases in hydrogen peroxide-damaged cells. Interacts (via N-terminus) with YBX1 (via C-terminus); the interaction is increased in presence of APEX1 acetylated. Interacts with HNRNPL; the interaction is DNA-dependent. Interacts (via N-terminus) with KPNA1 and KPNA2. Interacts with TXN; the interaction stimulates the FOS/JUN AP-1 complex DNA-binding activity in a redox-dependent manner. Interacts with GZMA, KRT8, MDM2, POLB, PRDX6, PRPF19, RPLP0, TOMM20 and WDR77. Binds to CDK5. Mg(2+) is required as a cofactor. The cofactor is Mn(2+). In terms of processing, phosphorylated. Phosphorylation by kinase PKC or casein kinase CK2 results in enhanced redox activity that stimulates binding of the FOS/JUN AP-1 complex to its cognate binding site. AP-endodeoxyribonuclease activity is not affected by CK2-mediated phosphorylation. Phosphorylation of Thr-232 by CDK5 in response to MPP(+)/MPTP (1-methyl-4-phenylpyridinium) reduces AP-endodeoxyribonuclease activity resulting in accumulation of DNA damage and contributing to neuronal death. Acetylated on Lys-6. Acetylation is increased by the transcriptional coactivator EP300 acetyltransferase, genotoxic agents like H(2)O(2) and methyl methanesulfonate (MMS). Acetylation increases its binding affinity to the negative calcium response element (nCaRE) DNA promoter. The acetylated form induces a stronger binding of YBX1 to the Y-box sequence in the MDR1 promoter than the unacetylated form. Deacetylated on lysines. Lys-6 is deacetylated by SIRT1. Post-translationally, cleaved at Lys-30 by granzyme A to create the mitochondrial form; leading in reduction of binding to DNA, AP endodeoxyribonuclease activity, redox activation of transcription factors and to enhanced cell death. Cleaved by granzyme K; leading to intracellular ROS accumulation and enhanced cell death after oxidative stress. In terms of processing, cys-64 and Cys-92 are nitrosylated in response to nitric oxide (NO) and lead to the exposure of the nuclear export signal (NES). Ubiquitinated by MDM2; leading to translocation to the cytoplasm and proteasomal degradation.

It is found in the nucleus. Its subcellular location is the nucleolus. It localises to the nucleus speckle. The protein localises to the endoplasmic reticulum. The protein resides in the cytoplasm. It is found in the mitochondrion. The catalysed reaction is a deoxyribonucleotide-2'-deoxyribose-5'-monophosphate-DNA + H2O = a 5'-end 2'-deoxyribose-5'-monophosphate-DNA + a 3'-end 2'-deoxyribonucleotide-DNA + H(+). The enzyme catalyses Exonucleolytic cleavage in the 3'- to 5'-direction to yield nucleoside 5'-phosphates.. It catalyses the reaction a 3'-end 2'-deoxyribonucleotide-3'-phosphoglycolate-DNA + H2O = 2-phosphoglycolate + a 3'-end 2'-deoxyribonucleotide-DNA + H(+). It carries out the reaction a 3'-end 2'-deoxyribonucleotide-8-oxoguanine-DNA + H2O = 8-oxo-dGMP + a 3'-end 2'-deoxyribonucleotide-DNA + H(+). Its activity is regulated as follows. NPM1 stimulates endodeoxyribonuclease activity on double-stranded DNA with AP sites, but inhibits endoribonuclease activity on single-stranded RNA containing AP sites. Functionally, multifunctional protein that plays a central role in the cellular response to oxidative stress. The two major activities of APEX1 are DNA repair and redox regulation of transcriptional factors. Functions as an apurinic/apyrimidinic (AP) endodeoxyribonuclease in the base excision repair (BER) pathway of DNA lesions induced by oxidative and alkylating agents. Initiates repair of AP sites in DNA by catalyzing hydrolytic incision of the phosphodiester backbone immediately adjacent to the damage, generating a single-strand break with 5'-deoxyribose phosphate and 3'-hydroxyl ends. Also incises at AP sites in the DNA strand of DNA/RNA hybrids, single-stranded DNA regions of R-loop structures, and single-stranded RNA molecules. Operates at switch sites of immunoglobulin (Ig) constant regions where it mediates Ig isotype class switch recombination. Processes AP sites induced by successive action of AICDA and UNG. Generates staggered nicks in opposite DNA strands resulting in the formation of double-strand DNA breaks that are finally resolved via non-homologous end joining repair pathway. Has 3'-5' exodeoxyribonuclease activity on mismatched deoxyribonucleotides at the 3' termini of nicked or gapped DNA molecules during short-patch BER. Possesses DNA 3' phosphodiesterase activity capable of removing lesions (such as phosphoglycolate and 8-oxoguanine) blocking the 3' side of DNA strand breaks. Also acts as an endoribonuclease involved in the control of single-stranded RNA metabolism. Plays a role in regulating MYC mRNA turnover by preferentially cleaving in between UA and CA dinucleotides of the MYC coding region determinant (CRD). In association with NMD1, plays a role in the rRNA quality control process during cell cycle progression. Acts as a loading factor for POLB onto non-incised AP sites in DNA and stimulates the 5'-terminal deoxyribose 5'-phosphate (dRp) excision activity of POLB. Exerts reversible nuclear redox activity to regulate DNA binding affinity and transcriptional activity of transcriptional factors by controlling the redox status of their DNA-binding domain, such as the FOS/JUN AP-1 complex after exposure to IR. Involved in calcium-dependent down-regulation of parathyroid hormone (PTH) expression by binding to negative calcium response elements (nCaREs). Together with HNRNPL or the dimer XRCC5/XRCC6, associates with nCaRE, acting as an activator of transcriptional repression. May also play a role in the epigenetic regulation of gene expression by participating in DNA demethylation. Stimulates the YBX1-mediated MDR1 promoter activity, when acetylated at Lys-6 and Lys-7, leading to drug resistance. Plays a role in protection from granzyme-mediated cellular repair leading to cell death. Binds DNA and RNA. Associates, together with YBX1, on the MDR1 promoter. Together with NPM1, associates with rRNA. This chain is DNA repair nuclease/redox regulator APEX1 (Apex1), found in Rattus norvegicus (Rat).